The sequence spans 352 residues: MSDTLPLLLRAARGEAVERPPVWMMRQAGRYMKIYRDLRDKYPSFRERSENPDLSYEISMQPFHAFKPDGVILFSDILTPLPGMGIDFDIIESKGPQIGDPIRSMDQVNALRPLNPSESMPFVGEVLGRLRESVGNEAAVLGFVGAPWTLAAYVVEGKSSKNYAVIKAMAFREPELLHKLLDHFAESIANYLRFQIDSGAQVVQMFDSWAGQLSPADYDTFAAPYQKKVVDLVKQTHPDTPFILYISGSAGVLERMATTGVDIISLDWTVDMGEALARLPEHIGVQGNVDPGLLFGTPDAIEARIDDCVRKARGRKHILNLGHGILPGTPEENGAAFFRSGKSVIDRIGAFA.

Residues 26–30 (RQAGR), F45, D76, Y153, S208, and H323 contribute to the substrate site.

It belongs to the uroporphyrinogen decarboxylase family. As to quaternary structure, homodimer.

It is found in the cytoplasm. The enzyme catalyses uroporphyrinogen III + 4 H(+) = coproporphyrinogen III + 4 CO2. It functions in the pathway porphyrin-containing compound metabolism; protoporphyrin-IX biosynthesis; coproporphyrinogen-III from 5-aminolevulinate: step 4/4. Functionally, catalyzes the decarboxylation of four acetate groups of uroporphyrinogen-III to yield coproporphyrinogen-III. This chain is Uroporphyrinogen decarboxylase, found in Parasynechococcus marenigrum (strain WH8102).